The sequence spans 420 residues: ATP phosphoribosyltransferase regulatory subunit (420 aa).

It belongs to the class-II aminoacyl-tRNA synthetase family. HisZ subfamily. In terms of assembly, heteromultimer composed of HisG and HisZ subunits.

It is found in the cytoplasm. It participates in amino-acid biosynthesis; L-histidine biosynthesis; L-histidine from 5-phospho-alpha-D-ribose 1-diphosphate: step 1/9. Functionally, required for the first step of histidine biosynthesis. May allow the feedback regulation of ATP phosphoribosyltransferase activity by histidine. This is ATP phosphoribosyltransferase regulatory subunit from Bacillus cereus (strain AH187).